The following is a 209-amino-acid chain: Large ribosomal subunit protein uL3 (209 aa).

Residues 122–152 (AIKRHGQSRGPMSHGSRYHRRPGSMGPVDPN) form a disordered region.

It belongs to the universal ribosomal protein uL3 family. Part of the 50S ribosomal subunit. Forms a cluster with proteins L14 and L19. Interacts with RNA helicase CshA.

In terms of biological role, one of the primary rRNA binding proteins, it binds directly near the 3'-end of the 23S rRNA, where it nucleates assembly of the 50S subunit. Strongly stimulates 23S rRNA precursor processing by mini-ribonuclease 3 (MrnC); 20-30% DMSO can replace L3, suggesting the protein may alter rRNA conformation. The protein is Large ribosomal subunit protein uL3 of Bacillus subtilis (strain 168).